The chain runs to 611 residues: MGVVDPKTSQNTSKKRIDRRIYAEHFGPTTGDKVRLADTNLWLEVEYDLTSHIDHQPDIDSVNIGEEVKFGGGKVIRDGMGQSQLLGEQVADTIITNALIVDYSGIYKADIAIKEGRISGIGKAGNPDIQPNVTLPIGAATEIIAGEGKILTAGGIDSHIHFIAPQQCETALMSGVTTMLGGGTGPAEGTLATTCTPGAYHIHSMLKATDAIPMNIGFLGKGNVSLPAPIVEQIEAGAIGLKLHEDWGSTPKAIDNCLSVAEEYDVQVAIHTDTLNESGYLDSTLGAFKDRCIHTFHTEGAGGGHAPDILKAIGETNVLPSSTNPTRPFTINTIDEHLDMLMVCHHLSPAIAEDVAFAESRIRKETIAAEDILQDMGAISMMSSDSQAMGRVGEVIIRTWQTADKMKAQRGHLAPDQSAKTEQSLDNIMLSPTDSDSGNDNFRIKRYLAKYTINPAITHGISDEVGSLELGKWADLVLWSPAFFGVKPDLIIKGGLIAAAPMGDPNASISTPQPVHYRSMFGSFPKTVAQTCITFMSSAAIDKGVDRQLGLEKVIKAVHNIRKVRKQDMKFNSYCPQMEVNPETYEVYADGELLTCEPAEHLPMAQRYFLF.

A Urease domain is found at 154-611 (GGIDSHIHFI…LPMAQRYFLF (458 aa)). Residues His-159, His-161, and Lys-242 each contribute to the Ni(2+) site. Residue Lys-242 is modified to N6-carboxylysine. His-244 lines the substrate pocket. 2 residues coordinate Ni(2+): His-271 and His-297. His-345 acts as the Proton donor in catalysis. Residue Asp-385 participates in Ni(2+) binding. Residues 411-434 (GHLAPDQSAKTEQSLDNIMLSPTD) are disordered. Polar residues predominate over residues 418–434 (SAKTEQSLDNIMLSPTD).

It belongs to the metallo-dependent hydrolases superfamily. Urease alpha subunit family. As to quaternary structure, heterotrimer of UreA (gamma), UreB (beta) and UreC (alpha) subunits. Three heterotrimers associate to form the active enzyme. The cofactor is Ni cation. In terms of processing, carboxylation allows a single lysine to coordinate two nickel ions.

It is found in the cytoplasm. The enzyme catalyses urea + 2 H2O + H(+) = hydrogencarbonate + 2 NH4(+). It functions in the pathway nitrogen metabolism; urea degradation; CO(2) and NH(3) from urea (urease route): step 1/1. The sequence is that of Urease subunit alpha 2 from Psychrobacter cryohalolentis (strain ATCC BAA-1226 / DSM 17306 / VKM B-2378 / K5).